Reading from the N-terminus, the 319-residue chain is tRNA dimethylallyltransferase (319 aa).

Position 10-17 (10-17 (GPTAVGKT)) interacts with ATP. 12–17 (TAVGKT) provides a ligand contact to substrate. The interaction with substrate tRNA stretch occupies residues 35-38 (DSMQ).

The protein belongs to the IPP transferase family. In terms of assembly, monomer. Mg(2+) serves as cofactor.

The enzyme catalyses adenosine(37) in tRNA + dimethylallyl diphosphate = N(6)-dimethylallyladenosine(37) in tRNA + diphosphate. Catalyzes the transfer of a dimethylallyl group onto the adenine at position 37 in tRNAs that read codons beginning with uridine, leading to the formation of N6-(dimethylallyl)adenosine (i(6)A). The protein is tRNA dimethylallyltransferase of Symbiobacterium thermophilum (strain DSM 24528 / JCM 14929 / IAM 14863 / T).